The sequence spans 367 residues: Alanine racemase (367 aa).

Lys-40 serves as the catalytic Proton acceptor; specific for D-alanine. Lys-40 is subject to N6-(pyridoxal phosphate)lysine. Arg-136 lines the substrate pocket. Tyr-263 serves as the catalytic Proton acceptor; specific for L-alanine. Met-310 lines the substrate pocket.

The protein belongs to the alanine racemase family. The cofactor is pyridoxal 5'-phosphate.

The enzyme catalyses L-alanine = D-alanine. The protein operates within amino-acid biosynthesis; D-alanine biosynthesis; D-alanine from L-alanine: step 1/1. Its function is as follows. Catalyzes the interconversion of L-alanine and D-alanine. May also act on other amino acids. This chain is Alanine racemase (alr), found in Streptococcus thermophilus (strain ATCC BAA-491 / LMD-9).